The primary structure comprises 147 residues: PTPN13-like protein, Y-linked (147 aa).

In terms of tissue distribution, expressed in testis. Detected in spermatocytes, spermatids and spermatozoa (at protein level).

In Homo sapiens (Human), this protein is PTPN13-like protein, Y-linked (PRY).